The following is a 515-amino-acid chain: Zinc metalloproteinase-disintegrin-like EoMP06 (515 aa).

The propeptide occupies 1-94 (VEDHCYYHGR…TLGLIVPPHG (94 aa)). At Gln-95 the chain carries Pyrrolidone carboxylic acid. Residues 100 to 296 (KFIELIIVVD…YNPKCIVDPP (197 aa)) enclose the Peptidase M12B domain. Glu-103 provides a ligand contact to Ca(2+). The N-linked (GlcNAc...) asparagine glycan is linked to Asn-160. Ca(2+) is bound at residue Asp-187. Asn-194 and Asn-225 each carry an N-linked (GlcNAc...) asparagine glycan. Disulfide bonds link Cys-211–Cys-291, Cys-251–Cys-275, and Cys-253–Cys-258. Residue His-236 participates in Zn(2+) binding. Glu-237 is an active-site residue. Residues His-240 and His-246 each coordinate Zn(2+). Residues Cys-291, Val-306, Asn-309, Val-311, Glu-313, Glu-316, and Asp-319 each coordinate Ca(2+). In terms of domain architecture, Disintegrin spans 304–390 (PAVCGNGVWE…ECPRNEFQRN (87 aa)). Cystine bridges form between Cys-307–Cys-336, Cys-318–Cys-331, Cys-320–Cys-326, Cys-330–Cys-353, Cys-344–Cys-350, Cys-349–Cys-375, Cys-362–Cys-382, Cys-369–Cys-401, Cys-394–Cys-406, Cys-413–Cys-466, Cys-428–Cys-477, Cys-441–Cys-454, Cys-461–Cys-503, and Cys-497–Cys-508. A D/ECD-tripeptide motif is present at residues 368-370 (DCD). 3 residues coordinate Ca(2+): Asp-370, Val-371, and Asn-385.

This sequence belongs to the venom metalloproteinase (M12B) family. P-III subfamily. P-IIIa sub-subfamily. Monomer. The cofactor is Zn(2+). In terms of tissue distribution, expressed by the venom gland.

Its subcellular location is the secreted. Its function is as follows. Snake venom zinc metalloproteinase that catalyzes the conversion of prothrombin (F2) to alpha-thrombin through formation of a thrombin intermediate, thereby functioning as a procoagulant protein. The chain is Zinc metalloproteinase-disintegrin-like EoMP06 from Echis ocellatus (Ocellated saw-scaled viper).